A 177-amino-acid chain; its full sequence is Protein BROTHER of FT and TFL 1 (177 aa).

The protein belongs to the phosphatidylethanolamine-binding protein family.

It is found in the cytoplasm. Its function is as follows. May form complexes with phosphorylated ligands by interfering with kinases and their effectors. The protein is Protein BROTHER of FT and TFL 1 (BFT) of Arabidopsis thaliana (Mouse-ear cress).